The sequence spans 106 residues: Putative double-stranded DNA mimic protein VIBHAR_02752 (106 aa).

Belongs to the putative dsDNA mimic protein family.

Its function is as follows. May act as a double-stranded DNA (dsDNA) mimic. Probably regulates the activity of a dsDNA-binding protein. This chain is Putative double-stranded DNA mimic protein VIBHAR_02752, found in Vibrio campbellii (strain ATCC BAA-1116).